The chain runs to 2211 residues: Orsellinic acid synthase (2211 aa).

The interval 44 to 246 (TFREQVSDAI…TVAVVHSLYH (203 aa)) is N-terminal acylcarrier protein transacylase domain (SAT). One can recognise a Ketosynthase family 3 (KS3) domain in the interval 380–805 (WDDIAIVGMA…GSNAAVIIGE (426 aa)). Residues Cys549, His684, and His724 each act as for beta-ketoacyl synthase activity in the active site. Residues 910-1228 (VFIFSGQGSQ…QLTTLKKNVP (319 aa)) form a malonyl-CoA:ACP transacylase (MAT) domain region. Ser1006 (for acyl/malonyl transferase activity) is an active-site residue. The interval 1309–1440 (HAIQKLSHGA…GVVKQSNMAS (132 aa)) is N-terminal hotdog fold. The region spanning 1309–1629 (HAIQKLSHGA…FQHVKIPLIE (321 aa)) is the PKS/mFAS DH domain. Residues 1334–1573 (EFIEGHLVCG…GATTLRAPVV (240 aa)) form a product template (PT) domain region. The active-site Proton acceptor; for dehydratase activity is the His1339. The segment at 1473 to 1629 (VQVFSKRAMY…FQHVKIPLIE (157 aa)) is C-terminal hotdog fold. The active-site Proton donor; for dehydratase activity is the Asp1537. 2 Carrier domains span residues 1681 to 1755 (AAPE…EALS) and 1787 to 1865 (STVD…VKRP). At Ser1715 the chain carries O-(pantetheine 4'-phosphoryl)serine. The interval 1755–1786 (SPTPVGNDVDNDSPTPGSERGSDSAISTPASV) is disordered. Position 1824 is an O-(pantetheine 4'-phosphoryl)serine (Ser1824). Positions 1937 to 2204 (SGKSPLFLIH…AAVSAALVDA (268 aa)) are thioesterase (TE) domain.

It catalyses the reaction 3 malonyl-CoA + acetyl-CoA + 2 H(+) = orsellinate + 3 CO2 + 4 CoA. It participates in secondary metabolite biosynthesis. Non-reducing polyketide synthase; part of the gene cluster that mediates the biosynthesis of the bibenzoquinone oosporein, a metabolite required for fungal virulence that acts by evading host immunity to facilitate fungal multiplication in insects. The non-reducing polyketide synthase OpS1 produces orsellinic acid by condensing acetyl-CoA with 3 malonyl-CoA units. Orsellinic acid is then hydroxylated to benzenetriol by the hydroxylase OpS4. The intermediate is oxidized either nonenzymatically to 5,5'-dideoxy-oosporein or enzymatically to benzenetetrol by the oxidoreductase OpS7. The latter is further dimerized to oosporein by the catalase OpS5. OpS6 probably functions en route for protecting cells against oxidative stress by scavenging any leaked free radical form of benzenetetrol by activating the thiol group of glutathione. The chain is Orsellinic acid synthase from Beauveria bassiana (strain ARSEF 2860) (White muscardine disease fungus).